Consider the following 137-residue polypeptide: Protein shisa-5 (137 aa).

Residues 3 to 23 traverse the membrane as a helical segment; that stretch reads FGATLAVGLTIFVLSVVTIII.

It belongs to the shisa family. As to quaternary structure, interacts with PDCD6; PDCD6 can stabilize SHISA5.

The protein resides in the endoplasmic reticulum membrane. It localises to the nucleus membrane. Its function is as follows. Can induce apoptosis in a caspase-dependent manner and plays a role in p53/TP53-dependent apoptosis. The polypeptide is Protein shisa-5 (SHISA5) (Pongo abelii (Sumatran orangutan)).